Here is a 368-residue protein sequence, read N- to C-terminus: MRGPALLLALRALCALSALRGTARAVNNSGRWWGIINVASSTNLLTDSGSVQLVLEPGLQLLSRKQRRLIRQNPGILHSVSAGLQSAVRECQWQFRNRRWNCPTSQGPNIFGKIVNRGCRETAFIFAITSAGVTHSVARSCSEGSIESCTCDYRRRGPGGPDWHWGGCSDNIDFGRLFGREFVDSSEKGRDLRFLMNLHNNEAGRMTVFSEMRQECKCHGMSGSCTVRTCWMRLPTFRAVGDVLKDRFDGASRVIYGNKGSNRASRVELHHLEPENPAHKPPSPHDLVYFEKSPNFCTYSGKMGTAGTAGRACNSSSPGLDGCELLCCGRGFRTRTQRVTERCNCTFHWCCHVSCLNCTNTQVLHECL.

Positions 1–25 (MRGPALLLALRALCALSALRGTARA) are cleaved as a signal peptide. Cystine bridges form between Cys-91–Cys-102, Cys-141–Cys-149, Cys-151–Cys-168, Cys-216–Cys-230, Cys-218–Cys-225, Cys-297–Cys-328, Cys-313–Cys-323, Cys-327–Cys-367, Cys-343–Cys-358, Cys-345–Cys-355, and Cys-350–Cys-351. The O-palmitoleoyl serine; by PORCN moiety is linked to residue Ser-222.

The protein belongs to the Wnt family. Forms a soluble 1:1 complex with AFM; this prevents oligomerization and is required for prolonged biological activity. The complex with AFM may represent the physiological form in body fluids. Interacts with PORCN. Post-translationally, N-glycosylated. N-glycosylation favors subsequent palmitoleoylation. Palmitoleoylation is required for efficient binding to frizzled receptors. Palmitoleoylation is necessary for proper trafficking to cell surface. Depalmitoleoylated by NOTUM, leading to inhibit Wnt signaling pathway.

It is found in the secreted. It localises to the extracellular space. The protein localises to the extracellular matrix. In terms of biological role, ligand for members of the frizzled family of seven transmembrane receptors. Acts in the canonical Wnt signaling pathway by promoting beta-catenin-dependent transcriptional activation. Developmental protein that promotes cell proliferation in the developing spinal cord. Has a role in osteoblast function, bone development and bone homeostasis. The polypeptide is Protein Wnt-1 (WNT1) (Gallus gallus (Chicken)).